The following is a 118-amino-acid chain: Small ribosomal subunit protein uS13 (118 aa).

Residues 94–118 are disordered; that stretch reads SLPLRGQRTKTNARTRKGPRKPIKK.

Belongs to the universal ribosomal protein uS13 family. Part of the 30S ribosomal subunit. Forms a loose heterodimer with protein S19. Forms two bridges to the 50S subunit in the 70S ribosome.

Located at the top of the head of the 30S subunit, it contacts several helices of the 16S rRNA. In the 70S ribosome it contacts the 23S rRNA (bridge B1a) and protein L5 of the 50S subunit (bridge B1b), connecting the 2 subunits; these bridges are implicated in subunit movement. Contacts the tRNAs in the A and P-sites. This Vibrio cholerae serotype O1 (strain ATCC 39315 / El Tor Inaba N16961) protein is Small ribosomal subunit protein uS13.